A 261-amino-acid chain; its full sequence is Carnitinyl-CoA dehydratase (261 aa).

Glu111 (nucleophile) is an active-site residue. The active-site Proton acceptor is Glu131.

It belongs to the enoyl-CoA hydratase/isomerase family.

The enzyme catalyses (R)-carnitinyl-CoA = crotonobetainyl-CoA + H2O. The protein operates within amine and polyamine metabolism; carnitine metabolism. Its function is as follows. Catalyzes the reversible dehydration of L-carnitinyl-CoA to crotonobetainyl-CoA. In Salmonella typhi, this protein is Carnitinyl-CoA dehydratase.